The sequence spans 282 residues: Bis(5'-nucleosyl)-tetraphosphatase, symmetrical (282 aa).

This sequence belongs to the Ap4A hydrolase family.

It carries out the reaction P(1),P(4)-bis(5'-adenosyl) tetraphosphate + H2O = 2 ADP + 2 H(+). Hydrolyzes diadenosine 5',5'''-P1,P4-tetraphosphate to yield ADP. This chain is Bis(5'-nucleosyl)-tetraphosphatase, symmetrical, found in Burkholderia thailandensis (strain ATCC 700388 / DSM 13276 / CCUG 48851 / CIP 106301 / E264).